Consider the following 142-residue polypeptide: Hemoglobin subunit alpha-1 (142 aa).

Ser1 is modified (N-acetylserine). The Globin domain maps to 1–142 (SLSDKDKAAV…VALALAERYR (142 aa)). His59 is a binding site for O2. Residue His88 participates in heme b binding.

The protein belongs to the globin family. In terms of assembly, hb1 is a heterotetramer of two alpha-1 chains and two beta chains. HbC is a heterotetramer of two alpha-1 chains and two beta-C chains. In terms of tissue distribution, red blood cells.

Functionally, involved in oxygen transport from gills to the various peripheral tissues. This Trematomus newnesi (Dusky notothen) protein is Hemoglobin subunit alpha-1 (hba1).